A 642-amino-acid chain; its full sequence is Threonine--tRNA ligase (642 aa).

Residues 1–61 (MPVIRFYDGS…REDAFIEFVD (61 aa)) enclose the TGS domain. Residues 243–534 (DHRKIGKFLQ…LIEECSGNLP (292 aa)) form a catalytic region. Zn(2+) contacts are provided by Cys-334, His-385, and His-511.

The protein belongs to the class-II aminoacyl-tRNA synthetase family. Homodimer. It depends on Zn(2+) as a cofactor.

The protein localises to the cytoplasm. The catalysed reaction is tRNA(Thr) + L-threonine + ATP = L-threonyl-tRNA(Thr) + AMP + diphosphate + H(+). Functionally, catalyzes the attachment of threonine to tRNA(Thr) in a two-step reaction: L-threonine is first activated by ATP to form Thr-AMP and then transferred to the acceptor end of tRNA(Thr). Also edits incorrectly charged L-seryl-tRNA(Thr). The polypeptide is Threonine--tRNA ligase (Buchnera aphidicola subsp. Acyrthosiphon pisum (strain APS) (Acyrthosiphon pisum symbiotic bacterium)).